Here is an 803-residue protein sequence, read N- to C-terminus: H(+)/Cl(-) exchange transporter 7 (803 aa).

The interval 1–46 (MANVSKKVSWSGRDRDDEEGAPLLRRTGQPDEETPLLNGAGPGARQ) is disordered. Topologically, residues 1–124 (MANVSKKVSW…TAFRTVEIKR (124 aa)) are cytoplasmic. Ser9 carries the phosphoserine modification. 2 helical membrane passes run 125 to 157 (WVIC…YRVI) and 172 to 195 (FSLL…VAFI). The short motif at 201 to 205 (GSGIP) is the Selectivity filter part_1 element. Residue Ser202 participates in chloride binding. Positions 204–211 (IPQIKCFL) form an intramembrane region, helical. 2 helical membrane passes run 221–239 (RLKT…VVGG) and 245–262 (EGPM…ISQG). The Selectivity filter part_2 motif lies at 243-247 (GKEGP). 2 intramembrane regions (helical) span residues 286–298 (FVSA…VSAA) and 302–310 (PVGGVLFSL). The next 5 membrane-spanning stretches (helical) occupy residues 320–339 (FLTW…LNFV), 373–403 (IPVF…FRIR), 408–430 (PCLQ…FVLI), 485–505 (PMTL…TYGL), and 510–533 (GVFI…LSYL). Residues 510–514 (GVFIP) carry the Selectivity filter part_3 motif. Phe512 contributes to the chloride binding site. The segment at residues 543–557 (GKYALMGAAAQLGGI) is an intramembrane region (helical). Positions 558–560 (VRM) form an intramembrane region, note=Loop between two helices. Residues 561–572 (TLSLTVIMMEAT) constitute an intramembrane region (helical). The note=Loop between two helices intramembrane region spans 573–576 (SNVT). A helical membrane pass occupies residues 577–595 (YGFPIMLVLMTAKIVGDVF). Over 596–803 (IEGLYDMHIQ…GLEELSLAQT (208 aa)) the chain is Cytoplasmic. Chloride is bound at residue Tyr600. 2 consecutive CBS domains span residues 629–693 (MSTP…VFVE) and 739–797 (MNPS…GLEE). ATP is bound by residues 656-658 (HNG) and 781-784 (TRKD). Residue Ser799 is modified to Phosphoserine.

Belongs to the chloride channel (TC 2.A.49) family. ClC-7/CLCN7 subfamily. Chloride channel 7 are heteromers of alpha (CLCN7) and beta (OSTM1) subunits. As to expression, liver, spleen, kidneys and brain.

It localises to the lysosome membrane. It catalyses the reaction 2 chloride(in) + H(+)(out) = 2 chloride(out) + H(+)(in). Functionally, slowly voltage-gated channel mediating the exchange of chloride ions against protons. Functions as antiporter and contributes to the acidification of the lysosome lumen and may be involved in maintaining lysosomal pH. The CLC channel family contains both chloride channels and proton-coupled anion transporters that exchange chloride or another anion for protons. The presence of conserved gating glutamate residues is typical for family members that function as antiporters. The sequence is that of H(+)/Cl(-) exchange transporter 7 from Mus musculus (Mouse).